A 143-amino-acid polypeptide reads, in one-letter code: Nucleoside diphosphate kinase (143 aa).

ATP-binding residues include K11, F59, R87, T93, R104, and N114. The active-site Pros-phosphohistidine intermediate is the H117.

It belongs to the NDK family. As to quaternary structure, homotetramer. It depends on Mg(2+) as a cofactor.

The protein localises to the cytoplasm. It catalyses the reaction a 2'-deoxyribonucleoside 5'-diphosphate + ATP = a 2'-deoxyribonucleoside 5'-triphosphate + ADP. The enzyme catalyses a ribonucleoside 5'-diphosphate + ATP = a ribonucleoside 5'-triphosphate + ADP. Functionally, major role in the synthesis of nucleoside triphosphates other than ATP. The ATP gamma phosphate is transferred to the NDP beta phosphate via a ping-pong mechanism, using a phosphorylated active-site intermediate. In Tolumonas auensis (strain DSM 9187 / NBRC 110442 / TA 4), this protein is Nucleoside diphosphate kinase.